A 211-amino-acid chain; its full sequence is GTP pyrophosphokinase YjbM (211 aa).

Guanosine 3'-diphosphate 5'-triphosphate-binding positions include 21–28 (KVKLKGIR), 41–42 (EF), and 46–48 (RVK). ATP contacts are provided by residues 46–48 (RVK), Ser52, 56–59 (KARR), Asp72, and Arg77. Arg59 provides a ligand contact to guanosine 3'-diphosphate 5'-triphosphate. Asp72 is a binding site for Mg(2+). Residues Arg105, 112-114 (KES), and His120 each bind guanosine 3'-diphosphate 5'-triphosphate. Glu139 (proton acceptor) is an active-site residue. Guanosine 3'-diphosphate 5'-triphosphate contacts are provided by residues Asn148 and 151–155 (ATIEH).

This sequence belongs to the RelA/SpoT family. Homotetramer.

It catalyses the reaction GTP + ATP = guanosine 3'-diphosphate 5'-triphosphate + AMP. The catalysed reaction is GDP + ATP = guanosine 3',5'-bis(diphosphate) + AMP. Its pathway is purine metabolism; ppGpp biosynthesis; ppGpp from GTP: step 1/2. With respect to regulation, allosterically regulated by its own products; pppGpp simulates synthesis 10-fold more than ppGpp. 2 pppGpp molecules bind in a regulatory cleft in the middle of the tetramer in an asymmetric manner. There is a specific contact of Lys-25 to the gamma-phosphate of pppGpp, explaining why pppGpp stimulates activity but ppGpp does not. Functionally, functions as a (p)ppGpp synthase; GDP can be used instead of GTP, resulting in an increase of (p)ppGpp synthesis. The enzyme binds ATP, then GDP or GTP and catalysis is highly cooperative. In eubacteria ppGpp (guanosine 3'-diphosphate 5'-diphosphate) is a mediator of the stringent response that coordinates a variety of cellular activities in response to changes in nutritional abundance. Probably has a minor role in the stringent response. This Bacillus subtilis (strain 168) protein is GTP pyrophosphokinase YjbM (yjbM).